The chain runs to 67 residues: DNA-directed RNA polymerase subunit omega (67 aa).

Belongs to the RNA polymerase subunit omega family. The RNAP catalytic core consists of 2 alpha, 1 beta, 1 beta' and 1 omega subunit. When a sigma factor is associated with the core the holoenzyme is formed, which can initiate transcription.

It catalyses the reaction RNA(n) + a ribonucleoside 5'-triphosphate = RNA(n+1) + diphosphate. Its function is as follows. Promotes RNA polymerase assembly. Latches the N- and C-terminal regions of the beta' subunit thereby facilitating its interaction with the beta and alpha subunits. This Burkholderia pseudomallei (strain 1106a) protein is DNA-directed RNA polymerase subunit omega.